An 837-amino-acid polypeptide reads, in one-letter code: E3 ubiquitin-protein ligase bre-1 (837 aa).

The interval 1 to 33 is disordered; the sequence is MMKRSNEGIGGENYASSPSDDGQQKRRKIQFEP. Residues 1 to 313 are interaction with ubc-1; the sequence is MMKRSNEGIG…AKEIENLRLE (313 aa). Coiled coils occupy residues 54-89 and 185-253; these read TSKLKQQLLYKNKRIAELEKENERSKRRQQTDESNF and HKEL…KHMR. Positions 269–302 are disordered; the sequence is GQSGGNGGATPSSSGTTNATEKKISAPDIPPSET. Residues 277–287 show a composition bias toward polar residues; that stretch reads ATPSSSGTTNA. Coiled coils occupy residues 300-397, 458-651, and 677-763; these read SETA…AFRS, DEMK…KAQT, and VQFK…NESV. The RING-type zinc finger occupies 785–824; sequence CPSCKTRPKDCIMLKCYHLFCETCIKTMYDTRQRKCPKCN.

The protein belongs to the BRE1 family. In terms of assembly, interacts with ubc-1. Interacts with mrg-1. In adult animals, expressed in oocytes, germ cells, pharyngeal and intestinal cells.

The protein localises to the nucleus. The enzyme catalyses S-ubiquitinyl-[E2 ubiquitin-conjugating enzyme]-L-cysteine + [acceptor protein]-L-lysine = [E2 ubiquitin-conjugating enzyme]-L-cysteine + N(6)-ubiquitinyl-[acceptor protein]-L-lysine.. It functions in the pathway protein modification; protein ubiquitination. Functionally, E3 ubiquitin-protein ligase that mediates monoubiquitination of 'Lys-117' of histone H2B. H2B 'Lys-117' ubiquitination gives a specific tag for epigenetic transcriptional activation and is also prerequisite for histone H3 'Lys-4' and 'Lys-79' methylation. Involved in regulating stem cell proliferative fate. This is E3 ubiquitin-protein ligase bre-1 (rfp-1) from Caenorhabditis elegans.